A 132-amino-acid chain; its full sequence is Ubiquinol-cytochrome c reductase complex assembly factor 4 (132 aa).

The first 15 residues, 1–15, serve as a signal peptide directing secretion; the sequence is MNRVLCAPAAGAVRA. At 16–78 the chain is on the mitochondrial matrix side; sequence LRLIGWASRS…GKGHQRPWWK (63 aa). The segment at 29 to 72 is disordered; the sequence is LPGSRDRAHPAAEEEDDPDRPIEFSSSKANPHRWSVGHTMGKGH. Residues 79 to 95 form a helical membrane-spanning segment; that stretch reads VLPLSCFLVALIIWCYL. The Mitochondrial intermembrane segment spans residues 96–132; it reads REESEADQWLRQVWGEVPEPSDRSEEPETPAAYRART. A disordered region spans residues 110–132; that stretch reads GEVPEPSDRSEEPETPAAYRART.

It belongs to the UQCC4 family. Forms a complex, named COMB/coordinator of mitochondrial CYTB biogenesis, composed of UQCC1, UQCC2, UQCC4, UQCC5 and UQCC6; stabilizes nascent cytochrome b/MT-CYB and promotes its membrane insertion. Forms a complex, named COMA, composed of UQCC1, UQCC2 and UQCC4; activates MT-CYB translation. Forms a complex, named COMC, composed of UQCC1, UQCC2; UQCC3 and UQCC4; mediates MT-CYB hemylation and association with the first nuclear-encoded complex III subunit UQCRQ. Complexes COMA and COMB are bound to the mitochondrion inner membrane by UQCC4.

The protein resides in the mitochondrion inner membrane. Required for the assembly and stability of the mitochondrial ubiquinol-cytochrome c reductase complex (complex III (CIII) or cytochrome b-c1 complex), a multisubunit transmembrane complex that is part of the mitochondrial electron transport chain (ETC) which drives oxidative phosphorylation. In Homo sapiens (Human), this protein is Ubiquinol-cytochrome c reductase complex assembly factor 4.